The chain runs to 203 residues: Holliday junction branch migration complex subunit RuvA (203 aa).

Residues 1–64 (MIGRLRGIIL…EDAQLLYGFN (64 aa)) form a domain I region. The interval 65 to 142 (NKQERTLFKE…KGLHGDLFTP (78 aa)) is domain II. The tract at residues 143-154 (AVDLVLTSPASP) is flexible linker. A domain III region spans residues 155-203 (TSEDAEQEAVAALVALGYKPQEASRMVSKIARPDASSETLIRDALRAAL).

It belongs to the RuvA family. As to quaternary structure, homotetramer. Forms an RuvA(8)-RuvB(12)-Holliday junction (HJ) complex. HJ DNA is sandwiched between 2 RuvA tetramers; dsDNA enters through RuvA and exits via RuvB. An RuvB hexamer assembles on each DNA strand where it exits the tetramer. Each RuvB hexamer is contacted by two RuvA subunits (via domain III) on 2 adjacent RuvB subunits; this complex drives branch migration. In the full resolvosome a probable DNA-RuvA(4)-RuvB(12)-RuvC(2) complex forms which resolves the HJ.

The protein resides in the cytoplasm. Functionally, the RuvA-RuvB-RuvC complex processes Holliday junction (HJ) DNA during genetic recombination and DNA repair, while the RuvA-RuvB complex plays an important role in the rescue of blocked DNA replication forks via replication fork reversal (RFR). RuvA specifically binds to HJ cruciform DNA, conferring on it an open structure. The RuvB hexamer acts as an ATP-dependent pump, pulling dsDNA into and through the RuvAB complex. HJ branch migration allows RuvC to scan DNA until it finds its consensus sequence, where it cleaves and resolves the cruciform DNA. This is Holliday junction branch migration complex subunit RuvA from Salmonella agona (strain SL483).